The following is a 55-amino-acid chain: uncharacterized protein (55 aa).

This is an uncharacterized protein from Mycoplasma mycoides.